The sequence spans 38 residues: Potassium channel toxin alpha-KTx 6.4 (38 aa).

4 cysteine pairs are disulfide-bonded: Cys-6/Cys-27, Cys-12/Cys-32, Cys-16/Cys-34, and Cys-22/Cys-37.

This sequence belongs to the short scorpion toxin superfamily. Potassium channel inhibitor family. Alpha-KTx 06 subfamily. As to expression, expressed by the venom gland.

Its subcellular location is the secreted. Functionally, potently, completely and reversibly blocks voltage-gated potassium channel Kv1.2/KCNA2 and Shaker B (Sh). Also blocks small conductance (SK) calcium-activated potassium channel (KCNN). The polypeptide is Potassium channel toxin alpha-KTx 6.4 (Pandinus imperator (Emperor scorpion)).